We begin with the raw amino-acid sequence, 776 residues long: DNA ligase (776 aa).

Residues 31-35 (DAEYD), 80-81 (SL), and glutamate 112 each bind NAD(+). Lysine 114 acts as the N6-AMP-lysine intermediate in catalysis. The NAD(+) site is built by arginine 135, glutamate 172, lysine 288, and lysine 312. Residues cysteine 406, cysteine 409, cysteine 436, and cysteine 442 each contribute to the Zn(2+) site. Positions 693 to 776 (AEGLPLAGQT…TFLAEQGIAV (84 aa)) constitute a BRCT domain.

It belongs to the NAD-dependent DNA ligase family. LigA subfamily. Mg(2+) is required as a cofactor. Mn(2+) serves as cofactor.

The catalysed reaction is NAD(+) + (deoxyribonucleotide)n-3'-hydroxyl + 5'-phospho-(deoxyribonucleotide)m = (deoxyribonucleotide)n+m + AMP + beta-nicotinamide D-nucleotide.. Functionally, DNA ligase that catalyzes the formation of phosphodiester linkages between 5'-phosphoryl and 3'-hydroxyl groups in double-stranded DNA using NAD as a coenzyme and as the energy source for the reaction. It is essential for DNA replication and repair of damaged DNA. This chain is DNA ligase, found in Pseudomonas putida (strain ATCC 47054 / DSM 6125 / CFBP 8728 / NCIMB 11950 / KT2440).